The sequence spans 397 residues: Acetate kinase (397 aa).

A Mg(2+)-binding site is contributed by Asn-8. Lys-15 is a binding site for ATP. Arg-92 is a substrate binding site. Catalysis depends on Asp-149, which acts as the Proton donor/acceptor. ATP contacts are provided by residues 209–213 (HLGNG), 283–285 (DFR), and 331–335 (GVGEN). Glu-385 contributes to the Mg(2+) binding site.

This sequence belongs to the acetokinase family. As to quaternary structure, homodimer. Mg(2+) is required as a cofactor. Mn(2+) serves as cofactor.

It is found in the cytoplasm. It carries out the reaction acetate + ATP = acetyl phosphate + ADP. It participates in metabolic intermediate biosynthesis; acetyl-CoA biosynthesis; acetyl-CoA from acetate: step 1/2. Its function is as follows. Catalyzes the formation of acetyl phosphate from acetate and ATP. Can also catalyze the reverse reaction. The polypeptide is Acetate kinase (Corynebacterium glutamicum (strain ATCC 13032 / DSM 20300 / JCM 1318 / BCRC 11384 / CCUG 27702 / LMG 3730 / NBRC 12168 / NCIMB 10025 / NRRL B-2784 / 534)).